Consider the following 157-residue polypeptide: Nascent polypeptide-associated complex subunit beta (157 aa).

Residues 1–31 are disordered; it reads MPVDPEKLAKLQKSTAKKVGGSRVKAKKGVK. The NAC-A/B domain maps to 33–98; that stretch reads EQDDTKLIET…PQEKNITQLI (66 aa). The disordered stretch occupies residues 125–157; sequence NPKDFGAAGEAGATEEANEDIPDLVDQKFDDVE. Residues 130 to 139 show a composition bias toward low complexity; the sequence is GAAGEAGATE.

The protein belongs to the NAC-beta family. In terms of assembly, part of the nascent polypeptide-associated complex (NAC), consisting of EGD2 and EGD1. NAC associates with ribosomes via EGD1.

The protein localises to the cytoplasm. Its subcellular location is the nucleus. Its function is as follows. Component of the nascent polypeptide-associated complex (NAC), a dynamic component of the ribosomal exit tunnel, protecting the emerging polypeptides from interaction with other cytoplasmic proteins to ensure appropriate nascent protein targeting. The NAC complex also promotes mitochondrial protein import by enhancing productive ribosome interactions with the outer mitochondrial membrane and blocks the inappropriate interaction of ribosomes translating non-secretory nascent polypeptides with translocation sites in the membrane of the endoplasmic reticulum. EGD1 may act as a transcription factor that exert a negative effect on the expression of several genes that are transcribed by RNA polymerase II. This Lodderomyces elongisporus (strain ATCC 11503 / CBS 2605 / JCM 1781 / NBRC 1676 / NRRL YB-4239) (Yeast) protein is Nascent polypeptide-associated complex subunit beta (EGD1).